The sequence spans 541 residues: Protein wntless homolog (541 aa).

The Cytoplasmic segment spans residues 1–15; that stretch reads MAGAIIENMSTKKLC. Residues 16-36 traverse the membrane as a helical segment; it reads IVGGILLVFQIIAFLVGGLIA. The Lumenal segment spans residues 37–232; sequence PGPTTAVSYM…GIHQNGGFTK (196 aa). An interaction with Wnt proteins region spans residues 101–232; it reads MEMSPWFQFM…GIHQNGGFTK (132 aa). A helical membrane pass occupies residues 233-253; the sequence is VWFAMKTFLTPSIFIIMVWYW. The Cytoplasmic segment spans residues 254–268; that stretch reads RRITMMSRPPVLLEK. The chain crosses the membrane as a helical span at residues 269–289; it reads VIFALGISMTFINIPVEWFSI. Topologically, residues 290–303 are lumenal; sequence GFDWTWMLLFGDIR. The helical transmembrane segment at 304–324 threads the bilayer; it reads QGIFYAMLLSFWIIFCGEHMM. Residues 325-331 lie on the Cytoplasmic side of the membrane; that stretch reads DQHERNH. Residues 332-352 form a helical membrane-spanning segment; it reads IAGYWKQVGPIAVGSFCLFIF. Residues 353-380 are Lumenal-facing; sequence DMCERGVQLTNPFYSIWTTDIGTELAMA. Residues 381–401 form a helical membrane-spanning segment; it reads FIIVAGICLCLYFLFLCFMVF. The Cytoplasmic portion of the chain corresponds to 402 to 431; the sequence is QVFRNISGKQSSLPAMSKVRRLHYEGLIFR. Residues 432 to 452 traverse the membrane as a helical segment; it reads FKFLMLITLACAAMTVIFFIV. Residues 453-471 are Lumenal-facing; the sequence is SQVTEGHWKWGGVTVQVNS. The chain crosses the membrane as a helical span at residues 472–492; it reads AFFTGIYGMWNLYVFALMFLY. Residues 493 to 541 lie on the Cytoplasmic side of the membrane; sequence APSHKNYGEDQSNGDLGVHSGEELQLTTTITHVDGPTEIYKLTRKEAQE.

The protein belongs to the wntless family. As to quaternary structure, interacts with WNT3A. Interacts with WNT1, WNT3 and WNT5A. Post-translationally, N-glycosylated.

Its subcellular location is the golgi apparatus membrane. It is found in the cytoplasmic vesicle membrane. It localises to the cell membrane. The protein localises to the endoplasmic reticulum membrane. The protein resides in the early endosome membrane. Regulates Wnt proteins sorting and secretion in a feedback regulatory mechanism. This reciprocal interaction plays a key role in the regulation of expression, subcellular location, binding and organelle-specific association of Wnt proteins. Plays also an important role in establishment of the anterior-posterior body axis formation during development. The sequence is that of Protein wntless homolog (WLS) from Homo sapiens (Human).